Reading from the N-terminus, the 291-residue chain is Oxidative stress-responsive serine-rich protein 1 (291 aa).

A disordered region spans residues 29 to 139 (ISLSVGEGPS…NAGENSTSLD (111 aa)). Residues 65–83 (STRKSSRGAVRTQRRRRSK) show a composition bias toward basic residues. The span at 95–105 (CSTTAPPSSSQ) shows a compositional bias: polar residues. Thr143 is subject to Phosphothreonine.

The sequence is that of Oxidative stress-responsive serine-rich protein 1 (Oser1) from Mus musculus (Mouse).